The primary structure comprises 550 residues: Cytokinin dehydrogenase 10 (550 aa).

A signal peptide spans 1–26 (MMPRAQLTTFLIVTSFLSTVPYLRAP). The FAD-binding PCMH-type domain maps to 64–245 (VHATPNGVFR…TRARIRLEPA (182 aa)). Residues G100, K101, and G102 each coordinate FAD. H103 is subject to Pros-8alpha-FAD histidine. FAD contacts are provided by S104, Q108, D169, T174, S180, I184, and I235. Residue N289 is glycosylated (N-linked (GlcNAc...) asparagine). FAD is bound by residues Y489, S524, and Q527. The tract at residues 523–550 (LSPGQGIFPPPPPPSPPPPAAGEPITAS) is disordered. Residues 530–543 (FPPPPPPSPPPPAA) are compositionally biased toward pro residues.

It belongs to the oxygen-dependent FAD-linked oxidoreductase family. In terms of assembly, monomer. Requires FAD as cofactor.

The protein resides in the secreted. It is found in the extracellular space. The catalysed reaction is N(6)-dimethylallyladenine + A + H2O = 3-methyl-2-butenal + adenine + AH2. Its function is as follows. Catalyzes the oxidation of cytokinins, a family of N(6)-substituted adenine derivatives that are plant hormones, where the substituent is an isopentenyl group. This is Cytokinin dehydrogenase 10 (CKX10) from Oryza sativa subsp. japonica (Rice).